The following is a 2537-amino-acid chain: Histone-lysine N-methyltransferase SETD2 (2537 aa).

Pro residues predominate over residues M1–K12. 5 disordered regions span residues M1 to A31, T91 to R142, P156 to R483, Y510 to R554, and S607 to K629. Basic and acidic residues predominate over residues D18 to A31. The segment covering T91 to N103 has biased composition (polar residues). Residue S132 is modified to Phosphoserine. A compositionally biased stretch (low complexity) spans P156–S166. The segment covering P187–P205 has biased composition (pro residues). Position 242 is a phosphoserine (S242). Basic and acidic residues predominate over residues L264–E291. S322, S324, and S345 each carry phosphoserine. Composition is skewed to basic and acidic residues over residues R336 to R401, R422 to R433, P440 to K468, and Y510 to K528. K360 participates in a covalent cross-link: Glycyl lysine isopeptide (Lys-Gly) (interchain with G-Cter in SUMO2). S423 bears the Phosphoserine mark. A phosphoserine mark is found at S532, S614, and S624. A compositionally biased stretch (polar residues) spans G613–P625. The residue at position 626 (T626) is a Phosphothreonine. Residue S633 is modified to Phosphoserine. K637 participates in a covalent cross-link: Glycyl lysine isopeptide (Lys-Gly) (interchain with G-Cter in SUMO2). A phosphoserine mark is found at S697, S707, S743, and S753. A disordered region spans residues R729–E749. A Glycyl lysine isopeptide (Lys-Gly) (interchain with G-Cter in SUMO2) cross-link involves residue K775. Disordered stretches follow at residues C829–D894, Q941–D974, E1015–D1078, and A1135–P1185. Positions D830 to K847 are enriched in basic and acidic residues. Over residues S849 to H858 the composition is skewed to polar residues. Over residues P867–I883 the composition is skewed to low complexity. Positions L951–D974 are enriched in basic and acidic residues. Residues D1026–D1037 are compositionally biased toward acidic residues. Phosphoserine is present on S1077. The span at S1150–R1165 shows a compositional bias: basic and acidic residues. Residue S1201 is modified to Phosphoserine. 3 disordered regions span residues G1232 to T1254, W1280 to I1346, and N1366 to Q1396. Composition is skewed to polar residues over residues F1235–T1254 and R1319–N1329. Basic and acidic residues predominate over residues N1366–P1377. Residues S1387, S1389, and S1391 each carry the phosphoserine modification. Residues D1392–S1688 are interaction with TUBA1A. The AWS domain occupies I1468–Q1522. Zn(2+) is bound by residues C1473, C1475, C1490, C1494, C1503, C1507, and C1513. Residues A1524–Q1641 form the SET domain. Residues K1534–W1536, H1577–Y1579, and N1602–H1603 each bind S-adenosyl-L-methionine. C1605 is a binding site for Zn(2+). A Post-SET domain is found at E1648–G1664. Q1650 provides a ligand contact to S-adenosyl-L-methionine. C1652 provides a ligand contact to Zn(2+). F1653 lines the S-adenosyl-L-methionine pocket. Zn(2+) is bound by residues C1654 and C1659. Phosphoserine occurs at positions 1670, 1818, and 1819. Residues T1806–K1848 form a disordered region. Residues S1818–D1833 are compositionally biased toward polar residues. 2 positions are modified to phosphothreonine: T1827 and T1846. 2 positions are modified to phosphoserine: S1862 and S1926. Disordered regions lie at residues S1914–D1981 and L1993–Q2110. Residues T1934–E1946 are compositionally biased toward basic and acidic residues. The segment covering T1947 to V1964 has biased composition (acidic residues). A phosphoserine mark is found at S1954, S1962, and S1969. 3 stretches are compositionally biased toward basic and acidic residues: residues E1965–D1978, L1993–A2020, and R2032–K2045. A phosphoserine mark is found at S2053 and S2055. Basic and acidic residues-rich tracts occupy residues R2063–D2073 and K2084–Q2108. A coiled-coil region spans residues S2090–M2119. A low charge region region spans residues Q2110 to P2339. Residues I2362–W2395 form the WW domain. The tract at residues L2412–E2438 is disordered. The interval T2430 to E2537 is interaction with POLR2A.

This sequence belongs to the class V-like SAM-binding methyltransferase superfamily. Histone-lysine methyltransferase family. SET2 subfamily. As to quaternary structure, specifically interacts with hyperphosphorylated C-terminal domain (CTD) of RNA polymerase II large subunit (POLR2A): binds to CTD heptad repeats doubly phosphorylated on 'Ser-2' and 'Ser-5' of each heptad. Interacts with HTT. Interacts with IWS1. Interacts with p53/TP53; leading to regulate p53/TP53 target genes. Component of a complex with HNRNPL. Interacts with TUBA1A; the interaction is independent on alpha-tubulin acetylation on 'Lys-40'. In terms of processing, may be automethylated.

It is found in the nucleus. It localises to the chromosome. It catalyses the reaction L-lysyl(36)-[histone H3] + 3 S-adenosyl-L-methionine = N(6),N(6),N(6)-trimethyl-L-lysyl(36)-[histone H3] + 3 S-adenosyl-L-homocysteine + 3 H(+). It carries out the reaction L-lysyl-[protein] + S-adenosyl-L-methionine = N(6)-methyl-L-lysyl-[protein] + S-adenosyl-L-homocysteine + H(+). The enzyme catalyses L-lysyl-[protein] + 3 S-adenosyl-L-methionine = N(6),N(6),N(6)-trimethyl-L-lysyl-[protein] + 3 S-adenosyl-L-homocysteine + 3 H(+). Specifically inhibited by sinefungin derivatives. Histone methyltransferase that specifically trimethylates 'Lys-36' of histone H3 (H3K36me3) using dimethylated 'Lys-36' (H3K36me2) as substrate. It is capable of trimethylating unmethylated H3K36 (H3K36me0) in vitro. Represents the main enzyme generating H3K36me3, a specific tag for epigenetic transcriptional activation. Plays a role in chromatin structure modulation during elongation by coordinating recruitment of the FACT complex and by interacting with hyperphosphorylated POLR2A. Acts as a key regulator of DNA mismatch repair in G1 and early S phase by generating H3K36me3, a mark required to recruit MSH6 subunit of the MutS alpha complex: early recruitment of the MutS alpha complex to chromatin to be replicated allows a quick identification of mismatch DNA to initiate the mismatch repair reaction. Required for DNA double-strand break repair in response to DNA damage: acts by mediating formation of H3K36me3, promoting recruitment of RAD51 and DNA repair via homologous recombination (HR). Acts as a tumor suppressor. H3K36me3 also plays an essential role in the maintenance of a heterochromatic state, by recruiting DNA methyltransferase DNMT3A. H3K36me3 is also enhanced in intron-containing genes, suggesting that SETD2 recruitment is enhanced by splicing and that splicing is coupled to recruitment of elongating RNA polymerase. Required during angiogenesis. Required for endoderm development by promoting embryonic stem cell differentiation toward endoderm: acts by mediating formation of H3K36me3 in distal promoter regions of FGFR3, leading to regulate transcription initiation of FGFR3. In addition to histones, also mediates methylation of other proteins, such as tubulins and STAT1. Trimethylates 'Lys-40' of alpha-tubulins such as TUBA1B (alpha-TubK40me3); alpha-TubK40me3 is required for normal mitosis and cytokinesis and may be a specific tag in cytoskeletal remodeling. Involved in interferon-alpha-induced antiviral defense by mediating both monomethylation of STAT1 at 'Lys-525' and catalyzing H3K36me3 on promoters of some interferon-stimulated genes (ISGs) to activate gene transcription. This is Histone-lysine N-methyltransferase SETD2 from Mus musculus (Mouse).